A 349-amino-acid polypeptide reads, in one-letter code: Myocyte-specific enhancer factor 2B (349 aa).

The MADS-box domain occupies 3 to 57; it reads RKKIQISRILDQRNRQVTFTKRKFGLMKKAYELSVLCDCDIALIIFNSAQRLFQY. A DNA-binding region (mef2-type) is located at residues 58 to 86; it reads ASSDMDRVLLKYTEYSEPHESRTNADILQ. 2 disordered regions span residues 237–317 and 330–349; these read GSFA…DFPR and AEPLRPSASLHRLTPDSWPR.

Belongs to the MEF2 family. In terms of assembly, heterodimer. Interacts with HDAC9. Interacts with HDAC7. Highest expression found in embryonic heart and skeletal muscle. Low levels found in adult spleen, lung and testis while no expression is found in adult heart, brain or skeletal muscle.

It localises to the nucleus. Functionally, transcriptional activator which binds specifically to the MEF2 element, 5'-YTA[AT](4)TAR-3', found in numerous muscle-specific genes. Activates transcription via this element. May be involved in muscle-specific and/or growth factor-related transcription. This is Myocyte-specific enhancer factor 2B (Mef2b) from Mus musculus (Mouse).